We begin with the raw amino-acid sequence, 42 residues long: YKQCHKKGGHCFPKEVLICIPPSSDFGKMDCRWKRKCCKKRS.

3 disulfides stabilise this stretch: C4-C37, C11-C31, and C19-C38.

The protein belongs to the crotamine-myotoxin family. As to quaternary structure, monomer. As to expression, expressed by the venom gland.

Its subcellular location is the secreted. Its function is as follows. Cationic peptide that possesses multiple functions. It acts as a cell-penetrating peptide (CPP), and as a potent voltage-gated potassium channel (Kv) inhibitor. It exhibits antimicrobial activities, and hind limb paralysis. It also induces potent blockade of neuromuscular transmission in young chicken biventer cervicis preparation and potent myotoxic effect. In mice, it induces myonecrosis, upon intramuscular or subcutaneous injections. This chain is Crotamine-IV-3, found in Crotalus durissus cumanensis (South American rattlesnake).